A 325-amino-acid polypeptide reads, in one-letter code: MALADSTRGLPNGGGGGGGSGSSSSSAEPPLFPDIVELNVGGQVYVTRRCTVVSVPDSLLWRMFTQQQPQELARDSKGRFFLDRDGFLFRYILDYLRDLQLVLPDYFPERSRLQREAEYFELPELVRRLGAPQQPGPGPPPSRRGVHKEGSLGDELLPLGYSEPEQQEGASAGAPSPTLELASRSPSGGAAGPLLTPSQSLDGSRRSGYITIGYRGSYTIGRDAQADAKFRRVARITVCGKTSLAKEVFGDTLNESRDPDRPPERYTSRYYLKFNFLEQAFDKLSESGFHMVACSSTGTCAFASSTDQSEDKIWTSYTEYVFCRE.

Residues 1 to 28 (MALADSTRGLPNGGGGGGGSGSSSSSAE) are disordered. The residue at position 2 (A2) is an N-acetylalanine. Residues 11 to 21 (PNGGGGGGGSG) are compositionally biased toward gly residues. The residue at position 119 (Y119) is a Phosphotyrosine. The interval 129 to 202 (LGAPQQPGPG…PLLTPSQSLD (74 aa)) is disordered. A phosphoserine mark is found at S151, S171, and S185. Residue T196 is modified to Phosphothreonine. Residue S200 is modified to Phosphoserine.

Interacts as a tetramer with GABBR1 and GABBR2. Present in a variety of fetal organs, with highest expression levels in the cochlea and brain and, in stark contrast, is detected only at extremely low levels in adult organs, such as brain and lung.

Its subcellular location is the presynaptic cell membrane. It localises to the postsynaptic cell membrane. In terms of biological role, auxiliary subunit of GABA-B receptors that determine the pharmacology and kinetics of the receptor response. Increases agonist potency and markedly alter the G-protein signaling of the receptors by accelerating onset and promoting desensitization. The polypeptide is BTB/POZ domain-containing protein KCTD12 (KCTD12) (Homo sapiens (Human)).